The chain runs to 434 residues: MENFNMPRSTTFYALGLSYKKADAVIRGKFSLDAQAQSDLLLQAKAEGIESLVVTSTCNRTEIYGFAHHPYELIKLLCENSNGSIEEFQQAAYIYKNEEAVSHMFRVGTGLDSQILGDFEIISQIKTAFNNSKQEGLVNTFLDRLVNTVIQASKKVKTETKISSGATSVSFASVQYIIRNVADIGSKNILLFGTGKIGRNTCENLVKHTKNSHITLINRTKNKAELLAGKLNVIVKDYADLKQELHQADVLVVATGAQNPTIDKASLALQKPLLILDLSIPRNVDANVEEIPGVTLIHLDALSQITDDTLERRKQHIPAAEAIIDDMKLELNTWVNGRKCAPTIHALKSKLNDIVSAEFAFQKKKITHFDDAQMDLISSRIIQKLTNHFASHLKNENTSVDQSIEFIEKIFQIGQLAPNKTSSPIADKYKINLS.

Substrate is bound by residues 57-60 (TCNR), Ser113, 118-120 (DFE), and Gln124. Cys58 (nucleophile) is an active-site residue. Residue 193-198 (GTGKIG) coordinates NADP(+).

Belongs to the glutamyl-tRNA reductase family. In terms of assembly, homodimer.

It carries out the reaction (S)-4-amino-5-oxopentanoate + tRNA(Glu) + NADP(+) = L-glutamyl-tRNA(Glu) + NADPH + H(+). Its pathway is porphyrin-containing compound metabolism; protoporphyrin-IX biosynthesis; 5-aminolevulinate from L-glutamyl-tRNA(Glu): step 1/2. Functionally, catalyzes the NADPH-dependent reduction of glutamyl-tRNA(Glu) to glutamate 1-semialdehyde (GSA). In Flavobacterium johnsoniae (strain ATCC 17061 / DSM 2064 / JCM 8514 / BCRC 14874 / CCUG 350202 / NBRC 14942 / NCIMB 11054 / UW101) (Cytophaga johnsonae), this protein is Glutamyl-tRNA reductase 2.